The sequence spans 260 residues: Zinc import ATP-binding protein ZnuC (260 aa).

Residues 18–234 (IRLQEVAVTF…PEYQKLFGSH (217 aa)) enclose the ABC transporter domain. Residue 50–57 (GNNGAGKT) coordinates ATP. The segment at 241-260 (VFPHDHHDHSGPALAGGGRG) is disordered.

The protein belongs to the ABC transporter superfamily. Zinc importer (TC 3.A.1.15.5) family. The complex is composed of two ATP-binding proteins (ZnuC), two transmembrane proteins (ZnuB) and a solute-binding protein (ZnuA).

It localises to the cell inner membrane. The catalysed reaction is Zn(2+)(out) + ATP(in) + H2O(in) = Zn(2+)(in) + ADP(in) + phosphate(in) + H(+)(in). In terms of biological role, part of the ABC transporter complex ZnuABC involved in zinc import. Responsible for energy coupling to the transport system. This chain is Zinc import ATP-binding protein ZnuC, found in Halorhodospira halophila (strain DSM 244 / SL1) (Ectothiorhodospira halophila (strain DSM 244 / SL1)).